The following is a 461-amino-acid chain: Cysteine--tRNA ligase (461 aa).

Cysteine 28 contributes to the Zn(2+) binding site. The 'HIGH' region signature appears at 30 to 40 (ITVYDLCHIGH). Positions 209, 234, and 238 each coordinate Zn(2+). A 'KMSKS' region motif is present at residues 266–270 (KMSKS). An ATP-binding site is contributed by lysine 269.

The protein belongs to the class-I aminoacyl-tRNA synthetase family. As to quaternary structure, monomer. The cofactor is Zn(2+).

The protein resides in the cytoplasm. It carries out the reaction tRNA(Cys) + L-cysteine + ATP = L-cysteinyl-tRNA(Cys) + AMP + diphosphate. In Shigella sonnei (strain Ss046), this protein is Cysteine--tRNA ligase.